Here is a 160-residue protein sequence, read N- to C-terminus: Type IV major fimbrial protein FimA (160 aa).

Residues 1–7 (MKSLQKG) constitute a propeptide, leader sequence. Phe8 carries the N-methylphenylalanine modification. A helical transmembrane segment spans residues 8–28 (FTLIELMIVVAIIGILAAIAI).

This sequence belongs to the N-Me-Phe pilin family. As to quaternary structure, the pili are polar flexible filaments of about 5.4 nanometers diameter and 2.5 micrometers average length; they consist of only a single polypeptide chain arranged in a helical configuration of five subunits per turn in the assembled pilus.

It localises to the fimbrium. Its subcellular location is the membrane. Its function is as follows. Major component of the type IV fimbriae that plays an essential role in twitching motility, natural transformation, and protease secretion. This chain is Type IV major fimbrial protein FimA (fimA), found in Dichelobacter nodosus (Bacteroides nodosus).